The chain runs to 424 residues: tRNA(Met) cytidine acetate ligase (424 aa).

ATP-binding positions include 7 to 20 (ITEY…HLHH), glycine 102, asparagine 174, and arginine 199.

This sequence belongs to the TmcAL family.

It localises to the cytoplasm. The enzyme catalyses cytidine(34) in elongator tRNA(Met) + acetate + ATP = N(4)-acetylcytidine(34) in elongator tRNA(Met) + AMP + diphosphate. Functionally, catalyzes the formation of N(4)-acetylcytidine (ac(4)C) at the wobble position of elongator tRNA(Met), using acetate and ATP as substrates. First activates an acetate ion to form acetyladenylate (Ac-AMP) and then transfers the acetyl group to tRNA to form ac(4)C34. The protein is tRNA(Met) cytidine acetate ligase of Alkaliphilus metalliredigens (strain QYMF).